The sequence spans 195 residues: Glycerol-3-phosphate acyltransferase (195 aa).

6 consecutive transmembrane segments (helical) span residues 2–22 (IFFS…SSAI), 54–74 (IAIS…WLGY), 80–100 (PIFL…PIFF), 107–127 (GVAT…IVMI), 132–152 (LTVL…FIIP), and 155–175 (AWHF…LVVI).

This sequence belongs to the PlsY family. In terms of assembly, probably interacts with PlsX.

Its subcellular location is the cell inner membrane. The catalysed reaction is an acyl phosphate + sn-glycerol 3-phosphate = a 1-acyl-sn-glycero-3-phosphate + phosphate. It functions in the pathway lipid metabolism; phospholipid metabolism. In terms of biological role, catalyzes the transfer of an acyl group from acyl-phosphate (acyl-PO(4)) to glycerol-3-phosphate (G3P) to form lysophosphatidic acid (LPA). This enzyme utilizes acyl-phosphate as fatty acyl donor, but not acyl-CoA or acyl-ACP. The chain is Glycerol-3-phosphate acyltransferase from Blochmanniella pennsylvanica (strain BPEN).